The primary structure comprises 533 residues: NAD(P)H-quinone oxidoreductase chain 4 2 (533 aa).

The next 14 membrane-spanning stretches (helical) occupy residues 5–25 (FPWL…IPVL), 33–53 (VRWY…MVFW), 86–106 (LAVP…FAAW), 114–134 (LFYF…AAQD), 135–155 (LILF…LISI), 168–188 (FILY…GMAF), 208–228 (ALEL…LPIF), 242–262 (SAPV…YGLI), 276–296 (FAPV…LTAF), 310–330 (ISHM…GLNG), 331–351 (AMLQ…LAGV), 384–404 (ASLA…FLGL), 416–436 (VGVI…LLSM), and 462–482 (TFIA…PKVA).

This sequence belongs to the complex I subunit 4 family.

It localises to the cellular thylakoid membrane. It carries out the reaction a plastoquinone + NADH + (n+1) H(+)(in) = a plastoquinol + NAD(+) + n H(+)(out). It catalyses the reaction a plastoquinone + NADPH + (n+1) H(+)(in) = a plastoquinol + NADP(+) + n H(+)(out). In terms of biological role, NDH-1 shuttles electrons from NAD(P)H, via FMN and iron-sulfur (Fe-S) centers, to quinones in the respiratory chain. The immediate electron acceptor for the enzyme in this species is believed to be plastoquinone. Couples the redox reaction to proton translocation (for every two electrons transferred, four hydrogen ions are translocated across the cytoplasmic membrane), and thus conserves the redox energy in a proton gradient. The polypeptide is NAD(P)H-quinone oxidoreductase chain 4 2 (Thermosynechococcus vestitus (strain NIES-2133 / IAM M-273 / BP-1)).